The sequence spans 187 residues: ADP-ribosylation factor-like protein 9 (187 aa).

GTP-binding positions include 25 to 32 (GLDGAGKT), 69 to 73 (EIGGS), and 126 to 129 (NKQD).

The protein belongs to the small GTPase superfamily. Arf family.

The polypeptide is ADP-ribosylation factor-like protein 9 (ARL9) (Homo sapiens (Human)).